An 80-amino-acid chain; its full sequence is Large ribosomal subunit protein bL31B (80 aa).

The protein belongs to the bacterial ribosomal protein bL31 family. Type B subfamily. As to quaternary structure, part of the 50S ribosomal subunit.

This chain is Large ribosomal subunit protein bL31B, found in Methylobacillus flagellatus (strain ATCC 51484 / DSM 6875 / VKM B-1610 / KT).